The sequence spans 490 residues: tRNA-guanine(15) transglycosylase (490 aa).

Asp92 serves as the catalytic Nucleophile. Positions 127 and 195 each coordinate substrate. Residues Cys278, Cys280, and Cys283 each contribute to the Zn(2+) site.

This sequence belongs to the archaeosine tRNA-ribosyltransferase family. The cofactor is Zn(2+).

The catalysed reaction is guanosine(15) in tRNA + 7-cyano-7-deazaguanine = 7-cyano-7-carbaguanosine(15) in tRNA + guanine. The protein operates within tRNA modification; archaeosine-tRNA biosynthesis. Functionally, exchanges the guanine residue with 7-cyano-7-deazaguanine (preQ0) at position 15 in the dihydrouridine loop (D-loop) of archaeal tRNAs. This is tRNA-guanine(15) transglycosylase from Haloarcula marismortui (strain ATCC 43049 / DSM 3752 / JCM 8966 / VKM B-1809) (Halobacterium marismortui).